A 134-amino-acid polypeptide reads, in one-letter code: Small ribosomal subunit protein uS9 (134 aa).

A compositionally biased stretch (basic and acidic residues) spans 98 to 114; that stretch reads SKQELKSHGFLTRDPRK. The interval 98–134 is disordered; that stretch reads SKQELKSHGFLTRDPRKKERKKYGHKKARKSFQFSKR. Positions 115 to 134 are enriched in basic residues; the sequence is KERKKYGHKKARKSFQFSKR.

The protein belongs to the universal ribosomal protein uS9 family.

This Chlamydia caviae (strain ATCC VR-813 / DSM 19441 / 03DC25 / GPIC) (Chlamydophila caviae) protein is Small ribosomal subunit protein uS9.